The chain runs to 182 residues: Sec-independent protein translocase protein TatB (182 aa).

A helical membrane pass occupies residues 1–21 (MFDIGFSELLLVFVIGLIVLG). Disordered regions lie at residues 87–107 (QAAE…ASDE) and 121–182 (TQHE…SDKP). The segment covering 168–182 (AAPVVESSPSSSDKP) has biased composition (low complexity).

It belongs to the TatB family. The Tat system comprises two distinct complexes: a TatABC complex, containing multiple copies of TatA, TatB and TatC subunits, and a separate TatA complex, containing only TatA subunits. Substrates initially bind to the TatABC complex, which probably triggers association of the separate TatA complex to form the active translocon.

The protein resides in the cell inner membrane. In terms of biological role, part of the twin-arginine translocation (Tat) system that transports large folded proteins containing a characteristic twin-arginine motif in their signal peptide across membranes. Together with TatC, TatB is part of a receptor directly interacting with Tat signal peptides. TatB may form an oligomeric binding site that transiently accommodates folded Tat precursor proteins before their translocation. The chain is Sec-independent protein translocase protein TatB from Salmonella choleraesuis (strain SC-B67).